A 467-amino-acid chain; its full sequence is Sexual differentiation process putative subtilase-type proteinase isp6 (467 aa).

Positions 86–176 constitute an Inhibitor I9 domain; that stretch reads YIIVLQPDLS…AVERDQVVSI (91 aa). Positions 186-467 constitute a Peptidase S8 domain; the sequence is PWGLARISHK…NLLAFNGAQE (282 aa). Residues aspartate 221, histidine 253, and serine 409 each act as charge relay system in the active site.

This sequence belongs to the peptidase S8 family.

This chain is Sexual differentiation process putative subtilase-type proteinase isp6 (isp6), found in Schizosaccharomyces pombe (strain 972 / ATCC 24843) (Fission yeast).